The primary structure comprises 262 residues: 4-hydroxy-2-oxo-heptane-1,7-dioate aldolase (262 aa).

His45 acts as the Proton acceptor in catalysis. A substrate-binding site is contributed by Gln147. Glu149 is a binding site for a divalent metal cation. Residues Ala174 and Asp175 each coordinate substrate. Asp175 lines the a divalent metal cation pocket.

The protein belongs to the HpcH/HpaI aldolase family. Homohexamer; trimer of dimers. It depends on a divalent metal cation as a cofactor.

It catalyses the reaction 4-hydroxy-2-oxoheptanedioate = succinate semialdehyde + pyruvate. The protein operates within aromatic compound metabolism; 4-hydroxyphenylacetate degradation; pyruvate and succinate semialdehyde from 4-hydroxyphenylacetate: step 7/7. In terms of biological role, catalyzes the reversible retro-aldol cleavage of 4-hydroxy-2-ketoheptane-1,7-dioate (HKHD) to pyruvate and succinic semialdehyde. The sequence is that of 4-hydroxy-2-oxo-heptane-1,7-dioate aldolase from Shigella sonnei (strain Ss046).